A 40-amino-acid polypeptide reads, in one-letter code: Natriuretic peptide TNPd (40 aa).

Cys9 and Cys25 are disulfide-bonded.

Belongs to the natriuretic peptide family. Expressed by the venom gland.

The protein localises to the secreted. Snake venom natriuretic peptide that exhibits vasoactive and hypotensive activity. Stimulates cGMP production through the natriuretic peptide receptor 1 (NPR1) with very high potencies for the rat NPR1 (EC(50)=18 nM), and very weak potencies over human NPR1 (30% activation at 10 uM). This chain is Natriuretic peptide TNPd, found in Oxyuranus microlepidotus (Inland taipan).